Here is a 274-residue protein sequence, read N- to C-terminus: Large ribosomal subunit protein uL2 (274 aa).

Residues 223–274 (VVMNPVDHPHGGGEGRTSGGRHPVSPWGVPTKGYKTRSNKRTDKYIVRRRNK) form a disordered region.

The protein belongs to the universal ribosomal protein uL2 family. Part of the 50S ribosomal subunit. Forms a bridge to the 30S subunit in the 70S ribosome.

In terms of biological role, one of the primary rRNA binding proteins. Required for association of the 30S and 50S subunits to form the 70S ribosome, for tRNA binding and peptide bond formation. It has been suggested to have peptidyltransferase activity; this is somewhat controversial. Makes several contacts with the 16S rRNA in the 70S ribosome. This Vibrio cholerae serotype O1 (strain M66-2) protein is Large ribosomal subunit protein uL2.